A 174-amino-acid chain; its full sequence is Co-chaperone protein HscB homolog (174 aa).

Residues 2–74 (NYFELFSLLP…IQRAEHLLTL (73 aa)) form the J domain.

The protein belongs to the HscB family. Interacts with HscA and stimulates its ATPase activity.

Its function is as follows. Co-chaperone involved in the maturation of iron-sulfur cluster-containing proteins. Seems to help targeting proteins to be folded toward HscA. The chain is Co-chaperone protein HscB homolog from Shewanella halifaxensis (strain HAW-EB4).